The following is a 364-amino-acid chain: Phospho-N-acetylmuramoyl-pentapeptide-transferase (364 aa).

Helical transmembrane passes span 18 to 38, 48 to 68, 91 to 111, 114 to 134, 154 to 174, 183 to 203, 214 to 234, 237 to 257, 280 to 300, and 343 to 363; these read SLLI…AQIL, LFPL…VVPV, GTPT…ALIW, LDPA…IGWI, LILQ…TQSA, GQII…VLVA, VDGL…ALMA, NPGL…FIVH, AIGI…IFFV, and TQIV…AVIS.

Belongs to the glycosyltransferase 4 family. MraY subfamily. Requires Mg(2+) as cofactor.

It is found in the cell inner membrane. The enzyme catalyses UDP-N-acetyl-alpha-D-muramoyl-L-alanyl-gamma-D-glutamyl-meso-2,6-diaminopimeloyl-D-alanyl-D-alanine + di-trans,octa-cis-undecaprenyl phosphate = di-trans,octa-cis-undecaprenyl diphospho-N-acetyl-alpha-D-muramoyl-L-alanyl-D-glutamyl-meso-2,6-diaminopimeloyl-D-alanyl-D-alanine + UMP. The protein operates within cell wall biogenesis; peptidoglycan biosynthesis. Functionally, catalyzes the initial step of the lipid cycle reactions in the biosynthesis of the cell wall peptidoglycan: transfers peptidoglycan precursor phospho-MurNAc-pentapeptide from UDP-MurNAc-pentapeptide onto the lipid carrier undecaprenyl phosphate, yielding undecaprenyl-pyrophosphoryl-MurNAc-pentapeptide, known as lipid I. The protein is Phospho-N-acetylmuramoyl-pentapeptide-transferase of Rippkaea orientalis (strain PCC 8801 / RF-1) (Cyanothece sp. (strain PCC 8801)).